The primary structure comprises 253 residues: Triosephosphate isomerase (253 aa).

9–11 is a binding site for substrate; that stretch reads NWK. The active-site Electrophile is the His-96. Glu-168 acts as the Proton acceptor in catalysis. Substrate is bound by residues Gly-174, Ser-213, and 234–235; that span reads GG.

The protein belongs to the triosephosphate isomerase family. Homodimer.

It is found in the cytoplasm. It carries out the reaction D-glyceraldehyde 3-phosphate = dihydroxyacetone phosphate. It functions in the pathway carbohydrate biosynthesis; gluconeogenesis. The protein operates within carbohydrate degradation; glycolysis; D-glyceraldehyde 3-phosphate from glycerone phosphate: step 1/1. Its function is as follows. Involved in the gluconeogenesis. Catalyzes stereospecifically the conversion of dihydroxyacetone phosphate (DHAP) to D-glyceraldehyde-3-phosphate (G3P). This chain is Triosephosphate isomerase, found in Hydrogenovibrio crunogenus (strain DSM 25203 / XCL-2) (Thiomicrospira crunogena).